The chain runs to 452 residues: Serine incorporator 2 (452 aa).

A run of 11 helical transmembrane segments spans residues 5 to 25 (LGAC…PCIL), 41 to 61 (FFTV…SPGV), 96 to 116 (AVYR…LLMV), 131 to 151 (GFWF…FYIP), 158 to 178 (IWFY…LLLL), 205 to 225 (LFFF…LLFV), 236 to 256 (GKVF…VAIL), 266 to 286 (SGLL…WLAL), 319 to 339 (WDAP…FISL), 387 to 407 (FFHL…TNWY), and 426 to 446 (ICAS…PLLL).

It belongs to the TDE1 family.

The protein resides in the cell membrane. It carries out the reaction a 1,2-diacyl-sn-glycero-3-phospho-L-serine(in) = a 1,2-diacyl-sn-glycero-3-phospho-L-serine(out). It catalyses the reaction a 1,2-diacyl-sn-glycero-3-phosphocholine(in) = a 1,2-diacyl-sn-glycero-3-phosphocholine(out). The enzyme catalyses a 1,2-diacyl-sn-glycero-3-phosphoethanolamine(in) = a 1,2-diacyl-sn-glycero-3-phosphoethanolamine(out). Its function is as follows. Non-ATP-dependent, non-specific lipid transporter for phosphatidylserine, phosphatidylcholine, and phosphatidylethanolamine. Functions as a scramblase that flips lipids in both directions across the membrane. In contrast to SERINC3 and SERINC5, has no effect on gammaretrovirus particles infectivity. The protein is Serine incorporator 2 (SERINC2) of Bos taurus (Bovine).